We begin with the raw amino-acid sequence, 147 residues long: Hemoglobin subunit delta (147 aa).

One can recognise a Globin domain in the interval 3 to 147 (HLTGEEKAAV…VANALAHKYH (145 aa)). His-64 and His-93 together coordinate heme b.

The protein belongs to the globin family. In terms of assembly, heterotetramer of two delta chains and two alpha chains. Red blood cells.

The polypeptide is Hemoglobin subunit delta (HBD) (Ailuropoda melanoleuca (Giant panda)).